Here is a 1028-residue protein sequence, read N- to C-terminus: Endosome/lysosome-associated apoptosis and autophagy regulator family member 2 (1028 aa).

The first 47 residues, 1 to 47 (MLLLTLRRAKGRDRGRPAGGPRRALSLPWSPAWICCWALAGCQAVWA), serve as a signal peptide directing secretion. The Extracellular portion of the chain corresponds to 48 to 928 (GDSSSSGRPL…TCETVDFWLK (881 aa)). Asparagine 168 carries an N-linked (GlcNAc...) asparagine glycan. Disulfide bonds link cysteine 292-cysteine 309, cysteine 322-cysteine 345, and cysteine 325-cysteine 357. N-linked (GlcNAc...) asparagine glycosylation is found at asparagine 404 and asparagine 690. In terms of domain architecture, MRH spans 671 to 876 (SDCFFYHEKE…LWESAEACPL (206 aa)). 4 disulfides stabilise this stretch: cysteine 673/cysteine 719, cysteine 729/cysteine 757, cysteine 826/cysteine 862, and cysteine 838/cysteine 874. Residues 929–949 (VGAGVGAFTAVLLVALTCYFW) traverse the membrane as a helical segment. Residues 950 to 1028 (KKNQKLEYKY…QLKSSRCPNI (79 aa)) are Cytoplasmic-facing. Serine 1017 is modified (phosphoserine).

Belongs to the ELAPOR family.

The protein resides in the cell membrane. In terms of biological role, functions as a regulator of the BMP signaling pathway and may be involved in epidermal differentiation. The polypeptide is Endosome/lysosome-associated apoptosis and autophagy regulator family member 2 (Mus musculus (Mouse)).